Reading from the N-terminus, the 386-residue chain is Patatin (386 aa).

Residues 1 to 23 (MATTKSFLILFFMILATTSSTCA) form the signal peptide. Positions 32 to 229 (LSIDGGGIKG…TVGDPALLSL (198 aa)) constitute a PNPLA domain. The short motif at 36 to 41 (GGGIKG) is the GXGXXG element. The short motif at 75–79 (GTSTG) is the GXSXG element. Ser77 (nucleophile) is an active-site residue. Asn115 is a glycosylation site (N-linked (GlcNAc...) asparagine). Asp215 acts as the Proton acceptor in catalysis. Residues 215–217 (DGA) carry the DGA/G motif.

The protein belongs to the patatin family.

It localises to the vacuole. Probable lipolytic acyl hydrolase (LAH), an activity which is thought to be involved in the response of tubers to pathogens. This is Patatin from Solanum tuberosum (Potato).